The chain runs to 104 residues: ATP-dependent Clp protease adapter protein ClpS (104 aa).

It belongs to the ClpS family. As to quaternary structure, binds to the N-terminal domain of the chaperone ClpA.

Its function is as follows. Involved in the modulation of the specificity of the ClpAP-mediated ATP-dependent protein degradation. The sequence is that of ATP-dependent Clp protease adapter protein ClpS from Desulforapulum autotrophicum (strain ATCC 43914 / DSM 3382 / VKM B-1955 / HRM2) (Desulfobacterium autotrophicum).